Reading from the N-terminus, the 531-residue chain is Developmental and secondary metabolism regulator VE1 (531 aa).

The 195-residue stretch at 26 to 220 (NRSLWYQMTV…ADQGCPVRIR (195 aa)) folds into the Velvet domain. A Nuclear localization signal motif is present at residues 40–45 (ERARAC). Disordered regions lie at residues 206-435 (LSKT…SQTS) and 447-517 (PVSP…SRAD). A compositionally biased stretch (basic and acidic residues) spans 244–253 (FERREEDFGR). The segment covering 295–306 (YPPPPPPPPSYE) has biased composition (pro residues). Over residues 348 to 357 (YAPTSQSPYS) the composition is skewed to polar residues. Over residues 381–390 (LKHELYDRRQ) the composition is skewed to basic and acidic residues. The span at 391-405 (STSTYVPPSPSVYST) shows a compositional bias: low complexity. Over residues 416-427 (SYPPTPVAAPRP) the composition is skewed to pro residues. The segment at 430–461 (MHSQTSLPALKIDQLVSPVSPLPPIEPQTGPA) is PEST. Over residues 479-491 (FAQSTRPLHNGQR) the composition is skewed to polar residues.

Belongs to the velvet family. VeA subfamily. Component of the heterotrimeric velvet complex composed of LAE1, VE1 and VELB; VE1 acting as a bridging protein between LAE1 and VELB. Interacts with VELB and VELC.

The protein localises to the nucleus. The protein resides in the cytoplasm. Component of the velvet transcription factor complex that controls sexual/asexual developmental ratio in response to light, promoting sexual development in the darkness while stimulating asexual sporulation under illumination. The velvet complex hat acts as a global regulator for secondary metabolite gene expression. Controls the expression of the cycotoxins fumonisins and fusarins gene cluster. Involved in cell wall integrity, cell surface hydrophobicity, hyphal polarity and conidiation pattern. Required for pathogenicity against maize seedlings. Involved in oxidative stress resistance by positively regulating the transcription of the catalase-encoding gene CAT2. This Gibberella moniliformis (strain M3125 / FGSC 7600) (Maize ear and stalk rot fungus) protein is Developmental and secondary metabolism regulator VE1.